We begin with the raw amino-acid sequence, 621 residues long: GPI-anchor transamidase component GPAA1 (621 aa).

Topologically, residues 1–19 (MGLLSDPVRRRALARIVLR) are cytoplasmic. Residues 20–41 (LNTPLCVLSYVAGIAWFLALAF) traverse the membrane as a helical segment. The Lumenal portion of the chain corresponds to 42-370 (PPLTQRTYMS…LLPALSRFVS (329 aa)). Positions 49 and 51 each coordinate a 2-acyl-6-[6-phosphoethanolamine-alpha-D-mannosyl-(1-&gt;2)-6-phosphoethanolamine-alpha-D-mannosyl-(1-&gt;6)-2-phosphoethanolamine-alpha-D-mannosyl-(1-&gt;4)-alpha-D-glucosaminyl]-1-(1-radyl,2-acyl-sn-glycero-3-phospho)-1D-myo-inositol. Residue asparagine 203 is glycosylated (N-linked (GlcNAc...) asparagine). Cysteine 259 and cysteine 266 are joined by a disulfide. Residues histidine 354, glutamine 355, and serine 356 each contribute to the a 2-acyl-6-[6-phosphoethanolamine-alpha-D-mannosyl-(1-&gt;2)-6-phosphoethanolamine-alpha-D-mannosyl-(1-&gt;6)-2-phosphoethanolamine-alpha-D-mannosyl-(1-&gt;4)-alpha-D-glucosaminyl]-1-(1-radyl,2-acyl-sn-glycero-3-phospho)-1D-myo-inositol site. A Mg(2+)-binding site is contributed by glutamine 355. Residues 371-393 (IGLYMPATGFLLLVLGLKALELW) form a helical membrane-spanning segment. Residues 394–425 (MQLHQAGVNPEEAGKAPSPGTPLLPTQGVGLA) lie on the Cytoplasmic side of the membrane. Residues 426 to 450 (SLTAPLLISQAMGLALYFLPVLGQH) form a helical membrane-spanning segment. The Lumenal segment spans residues 451-462 (LATQHFPVAEAE). A helical transmembrane segment spans residues 463 to 483 (AVVLTLLAIYVAGLALPHNTH). Over 484–495 (RVVNSQVPDRGW) the chain is Cytoplasmic. Helical transmembrane passes span 496–519 (MALK…LNFS) and 520–536 (LGFL…ALAK). The Cytoplasmic portion of the chain corresponds to 537–540 (PHGP). A helical transmembrane segment spans residues 541–563 (RTLYAALLVVTSPAVTLFGSLFL). At 564 to 597 (WRELLEVPLSLAEGWQLFLTALAQGVLEHYTYGA) the chain is on the lumenal side. The helical transmembrane segment at 598-619 (LLFPILALGLYPCWLLFWNVLF) threads the bilayer. Residues 620–621 (WK) are Cytoplasmic-facing.

As to quaternary structure, heteropentamer. Part of the GPI-anchor transamidase complex, consisting of PIGK, PIGT, PIGS, PIGU and GAA1. Interacts with PIGK. In terms of tissue distribution, ubiquitously expressed in fetal and adult tissues. Expressed at higher levels in fetal tissues than adult tissues. In embryos abundant in the choroid plexus, skeletal muscle,.

It localises to the endoplasmic reticulum membrane. It functions in the pathway glycolipid biosynthesis; glycosylphosphatidylinositol-anchor biosynthesis. Functionally, component of the glycosylphosphatidylinositol-anchor (GPI-anchor) transamidase (GPI-T) complex that catalyzes the formation of the linkage between a proprotein and a GPI-anchor and participates in GPI anchored protein biosynthesis. Binds GPI-anchor. The protein is GPI-anchor transamidase component GPAA1 of Mus musculus (Mouse).